We begin with the raw amino-acid sequence, 215 residues long: Cytochrome b6 (215 aa).

The helical transmembrane segment at 32–52 (IFHCLGGITLTCFLVQVATGF) threads the bilayer. A heme c-binding site is contributed by C35. H86 and H100 together coordinate heme b. A run of 3 helical transmembrane segments spans residues 90–110 (ASMMVLMMILHVFRVYLTGGF), 116–136 (LTWVTGVVLAVLTASFGVTGY), and 186–206 (LHTFVLPLLTAVFMLMHFPMI). Residues H187 and H202 each coordinate heme b.

The protein belongs to the cytochrome b family. PetB subfamily. The 4 large subunits of the cytochrome b6-f complex are cytochrome b6, subunit IV (17 kDa polypeptide, PetD), cytochrome f and the Rieske protein, while the 4 small subunits are PetG, PetL, PetM and PetN. The complex functions as a dimer. Heme b serves as cofactor. Heme c is required as a cofactor.

It localises to the plastid. The protein resides in the chloroplast thylakoid membrane. Functionally, component of the cytochrome b6-f complex, which mediates electron transfer between photosystem II (PSII) and photosystem I (PSI), cyclic electron flow around PSI, and state transitions. This chain is Cytochrome b6, found in Amborella trichopoda.